The sequence spans 468 residues: Nuclear receptor ROR-alpha A (468 aa).

A DNA-binding region (nuclear receptor) is located at residues 15-90 (IIPCKICGDK…VGMSRDAVKF (76 aa)). 2 NR C4-type zinc fingers span residues 18–38 (CKIC…CEGC) and 54–73 (CPRQ…CQHC). Disordered regions lie at residues 101 to 129 (LYAE…PLTP) and 142 to 163 (HDDL…DSGV). Positions 217 to 455 (ELEHLAQNIS…AHFPPLYKEL (239 aa)) constitute an NR LBD domain. The tract at residues 444–455 (VRAHFPPLYKEL) is AF-2.

The protein belongs to the nuclear hormone receptor family. NR1 subfamily. In terms of tissue distribution, expressed in the brain, in cerebellar-like structures, including Purkinje cells.

The protein localises to the nucleus. Functionally, nuclear receptor that binds DNA as a monomer to ROR response elements (RORE). Required for proper cerebellum development. The chain is Nuclear receptor ROR-alpha A (roraa) from Danio rerio (Zebrafish).